We begin with the raw amino-acid sequence, 949 residues long: RNA polymerase-associated protein RapA (949 aa).

A Helicase ATP-binding domain is found at 164–332 (EVADRIAPRV…FARLRLLDPN (169 aa)). 177–184 (DEVGLGKT) is an ATP binding site. Positions 278-281 (DEAH) match the DEAH box motif. Residues 474-628 (RVEWLIDTLK…TCPTGNALQH (155 aa)) enclose the Helicase C-terminal domain.

Belongs to the SNF2/RAD54 helicase family. RapA subfamily. As to quaternary structure, interacts with the RNAP. Has a higher affinity for the core RNAP than for the holoenzyme. Its ATPase activity is stimulated by binding to RNAP.

In terms of biological role, transcription regulator that activates transcription by stimulating RNA polymerase (RNAP) recycling in case of stress conditions such as supercoiled DNA or high salt concentrations. Probably acts by releasing the RNAP, when it is trapped or immobilized on tightly supercoiled DNA. Does not activate transcription on linear DNA. Probably not involved in DNA repair. This Stutzerimonas stutzeri (strain A1501) (Pseudomonas stutzeri) protein is RNA polymerase-associated protein RapA.